Reading from the N-terminus, the 88-residue chain is Small ribosomal subunit protein bS20 (88 aa).

Residues 1-27 (MANSKTAKKRAIQSEKRRQHNASRRSM) are disordered.

Belongs to the bacterial ribosomal protein bS20 family.

Binds directly to 16S ribosomal RNA. In Shewanella amazonensis (strain ATCC BAA-1098 / SB2B), this protein is Small ribosomal subunit protein bS20.